The chain runs to 153 residues: 3-hydroxyacyl-[acyl-carrier-protein] dehydratase FabZ (153 aa).

The active site involves histidine 56.

This sequence belongs to the thioester dehydratase family. FabZ subfamily.

Its subcellular location is the cytoplasm. The enzyme catalyses a (3R)-hydroxyacyl-[ACP] = a (2E)-enoyl-[ACP] + H2O. Functionally, involved in unsaturated fatty acids biosynthesis. Catalyzes the dehydration of short chain beta-hydroxyacyl-ACPs and long chain saturated and unsaturated beta-hydroxyacyl-ACPs. In Halorhodospira halophila (strain DSM 244 / SL1) (Ectothiorhodospira halophila (strain DSM 244 / SL1)), this protein is 3-hydroxyacyl-[acyl-carrier-protein] dehydratase FabZ.